The primary structure comprises 101 residues: Small ribosomal subunit protein uS14 (101 aa).

The segment at 1–21 (MAKTSAVEKNKRRRKSVAQQA) is disordered.

Belongs to the universal ribosomal protein uS14 family. As to quaternary structure, part of the 30S ribosomal subunit. Contacts proteins S3 and S10.

Its function is as follows. Binds 16S rRNA, required for the assembly of 30S particles and may also be responsible for determining the conformation of the 16S rRNA at the A site. The chain is Small ribosomal subunit protein uS14 from Agrobacterium fabrum (strain C58 / ATCC 33970) (Agrobacterium tumefaciens (strain C58)).